Reading from the N-terminus, the 231-residue chain is MAKVSKRLKALRSSVEANKLYAIDEAIALVKKAATAKFDESVDVSFNLGVDPRKSDQVIRGSVVLPKGTGKITRVAVFTQGANAEAAKEAGADIVGFEDLAAEIKAGNLNFDVVIASPDAMRIVGQLGTILGPRGLMPNPKVGTVTPNVAEAVKNAKAGQVQYRTDKAGIVHATIGRASFAEADLKENFDALLDAIVKAKPAAAKGQYLKKVAVSSTMGLGIRVDTSSVNN.

It belongs to the universal ribosomal protein uL1 family. Part of the 50S ribosomal subunit.

Binds directly to 23S rRNA. The L1 stalk is quite mobile in the ribosome, and is involved in E site tRNA release. Functionally, protein L1 is also a translational repressor protein, it controls the translation of the L11 operon by binding to its mRNA. The polypeptide is Large ribosomal subunit protein uL1 (Neisseria meningitidis serogroup A / serotype 4A (strain DSM 15465 / Z2491)).